A 738-amino-acid polypeptide reads, in one-letter code: Interleukin-12 receptor subunit beta-1 (738 aa).

Residues 1 to 19 (MDMMGLAGTSKHITFLLLC) form the signal peptide. The Extracellular segment spans residues 20–565 (QLGASGPGDG…QRFSFEVQIS (546 aa)). Fibronectin type-III domains follow at residues 47–152 (GPRN…TPPL), 152–258 (LGHI…PEVL), 259–359 (PQAK…LPAQ), 360–465 (ELTE…GNAS), and 469–565 (TPRH…VQIS). Asn-50 carries N-linked (GlcNAc...) asparagine glycosylation. Cysteines 53 and 63 form a disulfide. Residues Asn-73, Asn-86, Asn-130, Asn-144, Asn-169, and Asn-188 are each glycosylated (N-linked (GlcNAc...) asparagine). A WSXWS motif motif is present at residues 244–248 (WSDWS). Residues Asn-330, Asn-368, Asn-374, Asn-401, Asn-463, and Asn-477 are each glycosylated (N-linked (GlcNAc...) asparagine). Residues 566-591 (RLSIIFASLGSFASVLLVGSLGYIGL) traverse the membrane as a helical segment. The Cytoplasmic segment spans residues 592–738 (NRAAWHLCPP…PGPPTLGQEA (147 aa)). A Box 1 motif motif is present at residues 598–606 (LCPPLPTPC).

Belongs to the type I cytokine receptor family. Type 2 subfamily. Dimer or oligomer; disulfide-linked. Interacts with IL12RB2 to form the high affinity IL12 receptor. Heterodimer with IL23R; in presence of IL23. The heterodimer forms the IL23 receptor.

It is found in the membrane. Functions as an interleukin receptor which binds interleukin-12 with low affinity and is involved in IL12 transduction. Associated with IL12RB2 it forms a functional, high affinity receptor for IL12. Also associates with IL23R to form the interleukin-23 receptor which functions in IL23 signal transduction probably through activation of the Jak-Stat signaling cascade. The chain is Interleukin-12 receptor subunit beta-1 (Il12rb1) from Mus musculus (Mouse).